The chain runs to 692 residues: Elongation factor G (692 aa).

One can recognise a tr-type G domain in the interval 8–282 (ENTRNIGIMA…GVVDYLPSPV (275 aa)). Residues 17–24 (AHIDAGKT), 81–85 (DTPGH), and 135–138 (NKMD) contribute to the GTP site.

Belongs to the TRAFAC class translation factor GTPase superfamily. Classic translation factor GTPase family. EF-G/EF-2 subfamily.

It is found in the cytoplasm. In terms of biological role, catalyzes the GTP-dependent ribosomal translocation step during translation elongation. During this step, the ribosome changes from the pre-translocational (PRE) to the post-translocational (POST) state as the newly formed A-site-bound peptidyl-tRNA and P-site-bound deacylated tRNA move to the P and E sites, respectively. Catalyzes the coordinated movement of the two tRNA molecules, the mRNA and conformational changes in the ribosome. This is Elongation factor G from Geobacillus sp. (strain WCH70).